The primary structure comprises 442 residues: Histidine--tRNA ligase (442 aa).

Belongs to the class-II aminoacyl-tRNA synthetase family. Homodimer.

It localises to the cytoplasm. The catalysed reaction is tRNA(His) + L-histidine + ATP = L-histidyl-tRNA(His) + AMP + diphosphate + H(+). In Helicobacter pylori (strain ATCC 700392 / 26695) (Campylobacter pylori), this protein is Histidine--tRNA ligase (hisS).